We begin with the raw amino-acid sequence, 163 residues long: Cyanate hydratase (163 aa).

Active-site residues include Arg103, Glu106, and Ser129.

This sequence belongs to the cyanase family.

It carries out the reaction cyanate + hydrogencarbonate + 3 H(+) = NH4(+) + 2 CO2. Its function is as follows. Catalyzes the reaction of cyanate with bicarbonate to produce ammonia and carbon dioxide. The polypeptide is Cyanate hydratase (Talaromyces stipitatus (strain ATCC 10500 / CBS 375.48 / QM 6759 / NRRL 1006) (Penicillium stipitatum)).